We begin with the raw amino-acid sequence, 70 residues long: Translational regulator CsrA (70 aa).

This sequence belongs to the CsrA/RsmA family. Homodimer; the beta-strands of each monomer intercalate to form a hydrophobic core, while the alpha-helices form wings that extend away from the core.

The protein localises to the cytoplasm. Its function is as follows. A translational regulator that binds mRNA to regulate translation initiation and/or mRNA stability. Usually binds in the 5'-UTR at or near the Shine-Dalgarno sequence preventing ribosome-binding, thus repressing translation. Its main target seems to be the major flagellin gene, while its function is anatagonized by FliW. The sequence is that of Translational regulator CsrA from Rhodopirellula baltica (strain DSM 10527 / NCIMB 13988 / SH1).